A 464-amino-acid polypeptide reads, in one-letter code: Antithrombin-III (464 aa).

Residues 1–32 (MYSNVIGTVTSGKRKVYLLSLLLIGFWDCVTC) form the signal peptide. Intrachain disulfides connect cysteine 40–cysteine 160 and cysteine 53–cysteine 127. The residue at position 63 (threonine 63) is a Phosphothreonine; by FAM20C. The residue at position 68 (serine 68) is a Phosphoserine; by FAM20C. Tryptophan 81 is a heparin binding site. N-linked (GlcNAc...) asparagine glycosylation occurs at asparagine 128. Arginine 161 is a heparin binding site. An N-linked (GlcNAc...) asparagine glycan is attached at asparagine 167. Arginine 177 lines the heparin pocket. An N-linked (GlcNAc...) (complex) asparagine glycan is attached at asparagine 187. Asparagine 224 carries N-linked (GlcNAc...) asparagine glycosylation. An intrachain disulfide couples cysteine 279 to cysteine 462.

Belongs to the serpin family. Forms protease inhibiting heterodimer with TMPRSS7. Post-translationally, phosphorylated by FAM20C in the extracellular medium. Found in plasma.

Its subcellular location is the secreted. It is found in the extracellular space. Its function is as follows. Most important serine protease inhibitor in plasma that regulates the blood coagulation cascade. AT-III inhibits thrombin, matriptase-3/TMPRSS7, as well as factors IXa, Xa and XIa. Its inhibitory activity is greatly enhanced in the presence of heparin. The protein is Antithrombin-III (SERPINC1) of Homo sapiens (Human).